We begin with the raw amino-acid sequence, 349 residues long: UDP-N-acetylenolpyruvoylglucosamine reductase (349 aa).

Residues 26–197 (FDARARVAAR…VAVTFRLPKA (172 aa)) form the FAD-binding PCMH-type domain. Residue arginine 173 is part of the active site. The active-site Proton donor is the serine 249. Residue glutamate 345 is part of the active site.

This sequence belongs to the MurB family. It depends on FAD as a cofactor.

Its subcellular location is the cytoplasm. The enzyme catalyses UDP-N-acetyl-alpha-D-muramate + NADP(+) = UDP-N-acetyl-3-O-(1-carboxyvinyl)-alpha-D-glucosamine + NADPH + H(+). The protein operates within cell wall biogenesis; peptidoglycan biosynthesis. Its function is as follows. Cell wall formation. The chain is UDP-N-acetylenolpyruvoylglucosamine reductase from Burkholderia pseudomallei (strain 1710b).